Consider the following 133-residue polypeptide: MSWQTYVDDHLMVDFEGQGQHLAAAAILGHDGSVWAQSPHFPKFKPEEITNIMKDFDEPGFLAPTGLFLAGIKYMVIQGEPGAVIRGKKGSGGITIKKTNQALIFGLYEEPVTPGQCNMVVEKIGDYLVDQGY.

This sequence belongs to the profilin family. Occurs in many kinds of cells as a complex with monomeric actin in a 1:1 ratio.

The protein resides in the cytoplasm. The protein localises to the cytoskeleton. Functionally, binds to actin and affects the structure of the cytoskeleton. At high concentrations, profilin prevents the polymerization of actin, whereas it enhances it at low concentrations. By binding to PIP2, it inhibits the formation of IP3 and DG. In Nicotiana tabacum (Common tobacco), this protein is Profilin-3 (PRO3).